Consider the following 150-residue polypeptide: Endoribonuclease YbeY (150 aa).

Zn(2+)-binding residues include H102, H106, and H112.

This sequence belongs to the endoribonuclease YbeY family. It depends on Zn(2+) as a cofactor.

It is found in the cytoplasm. In terms of biological role, single strand-specific metallo-endoribonuclease involved in late-stage 70S ribosome quality control and in maturation of the 3' terminus of the 16S rRNA. The chain is Endoribonuclease YbeY from Thermotoga maritima (strain ATCC 43589 / DSM 3109 / JCM 10099 / NBRC 100826 / MSB8).